The sequence spans 327 residues: tRNA pseudouridine synthase B (327 aa).

The active-site Nucleophile is the aspartate 69. Positions 97, 201, and 222 each coordinate substrate.

It belongs to the pseudouridine synthase TruB family. Type 1 subfamily.

It carries out the reaction uridine(55) in tRNA = pseudouridine(55) in tRNA. Its function is as follows. Responsible for synthesis of pseudouridine from uracil-55 in the psi GC loop of transfer RNAs. The sequence is that of tRNA pseudouridine synthase B from Wigglesworthia glossinidia brevipalpis.